The sequence spans 282 residues: Biotin synthase (282 aa).

The Radical SAM core domain occupies 1 to 228; that stretch reads MQEIFLCSIS…NARLMVAGGR (228 aa). The [4Fe-4S] cluster site is built by C17, C21, and C24. [2Fe-2S] cluster is bound by residues C61, C96, C154, and R221.

The protein belongs to the radical SAM superfamily. Biotin synthase family. In terms of assembly, homodimer. Requires [4Fe-4S] cluster as cofactor. It depends on [2Fe-2S] cluster as a cofactor.

It carries out the reaction (4R,5S)-dethiobiotin + (sulfur carrier)-SH + 2 reduced [2Fe-2S]-[ferredoxin] + 2 S-adenosyl-L-methionine = (sulfur carrier)-H + biotin + 2 5'-deoxyadenosine + 2 L-methionine + 2 oxidized [2Fe-2S]-[ferredoxin]. It participates in cofactor biosynthesis; biotin biosynthesis; biotin from 7,8-diaminononanoate: step 2/2. Its function is as follows. Catalyzes the conversion of dethiobiotin (DTB) to biotin by the insertion of a sulfur atom into dethiobiotin via a radical-based mechanism. This chain is Biotin synthase, found in Helicobacter pylori (strain J99 / ATCC 700824) (Campylobacter pylori J99).